A 298-amino-acid polypeptide reads, in one-letter code: Glutamate/glycine mitochondrial carrier ymc1 (298 aa).

3 Solcar repeats span residues 14 to 98 (TKDF…CKRF), 106 to 193 (VTMP…LVKN), and 206 to 294 (TPGW…VSQH). 6 helical membrane passes run 17-37 (FLAG…FDCV), 67-87 (LAAF…CVSI), 112-132 (YVSG…VEHV), 172-192 (TAAR…ALVK), 212-232 (CVFG…FDIV), and 266-287 (FYRG…TFYV).

It belongs to the mitochondrial carrier (TC 2.A.29) family.

The protein resides in the mitochondrion inner membrane. Its function is as follows. Acts as a glutamate and glycine mitochondrial transmembrane transporter. This Schizosaccharomyces pombe (strain 972 / ATCC 24843) (Fission yeast) protein is Glutamate/glycine mitochondrial carrier ymc1 (ymc1).